Here is a 237-residue protein sequence, read N- to C-terminus: KH homology domain-containing protein 1 (237 aa).

Transmembrane regions (helical) follow at residues 7–29 (RLFR…FIYG) and 33–50 (LQTL…HLWI). The 60-residue stretch at 96–155 (PMVFHMEEDQEELIFGHGDTYLRCIEVHSHTLIQLESWFTATGQTRVTVVGPHRARQWLL) folds into the KH; atypical domain.

Belongs to the KHDC1 family.

It localises to the membrane. The chain is KH homology domain-containing protein 1 from Homo sapiens (Human).